The primary structure comprises 632 residues: Probable potassium transport system protein Kup 3 (632 aa).

12 helical membrane passes run L17 to L37, L60 to L80, T106 to I126, P144 to V164, F175 to I195, A210 to L230, W254 to L274, A292 to I312, I344 to F364, L370 to F390, L401 to A421, and I426 to T446.

This sequence belongs to the HAK/KUP transporter (TC 2.A.72) family.

It localises to the cell inner membrane. It carries out the reaction K(+)(in) + H(+)(in) = K(+)(out) + H(+)(out). In terms of biological role, transport of potassium into the cell. Likely operates as a K(+):H(+) symporter. This is Probable potassium transport system protein Kup 3 from Rhizobium etli (strain ATCC 51251 / DSM 11541 / JCM 21823 / NBRC 15573 / CFN 42).